A 202-amino-acid chain; its full sequence is Mevalonate-3-phosphate 5-kinase (202 aa).

The catalysed reaction is (R)-3-phosphomevalonate + ATP = (R)-3,5-bisphosphomevalonate + ADP + H(+). Its pathway is isoprenoid biosynthesis; isopentenyl diphosphate biosynthesis via mevalonate pathway. In terms of biological role, phosphorylates mevalonate 3-phosphate to form mevalonate 3,5-bisphosphate. Functions in an alternative mevalonate pathway, only present in extreme acidophiles of the Thermoplasmatales order, which passes through mevalonate 3-phosphate rather than mevalonate 5-phosphate. This Thermoplasma acidophilum (strain ATCC 25905 / DSM 1728 / JCM 9062 / NBRC 15155 / AMRC-C165) protein is Mevalonate-3-phosphate 5-kinase.